A 359-amino-acid polypeptide reads, in one-letter code: MTFDAASYTTQLNDKVARLRDLLAPFDAPEPQVFDSPLQNFRLRAEFRLWREAGERHYAMFSQDDKRTPILIEEFPIASQRINQLMPRLKAAWQASAPLSHKLFQVEFLTTLAGDAMITLCYHRPLDEHWHKAASQLAADLKVSVIGRSKGKREVIGQDYVVEKLEVGGRTFSYRQPEGAFTQPNGTVNQKMLNWAYEALGERQDDLLELYCGNGNFTLPLATRVRKVLATEISKTSVNAALSNLSENAVDNVTLVRLSAEELTEALNEVRPFRRLQGVDLKSYEFGSVFVDPPRAGMDPDTCELTRRFDNILYISCNPETLAANIAQLHDTHRITRCALFDQFPWTHHMESGVLLTRR.

The S-adenosyl-L-methionine site is built by Q183, Y211, N216, E232, and D292. The Nucleophile role is filled by C317. Residue E351 is the Proton acceptor of the active site.

This sequence belongs to the class I-like SAM-binding methyltransferase superfamily. RNA M5U methyltransferase family. TrmA subfamily.

It carries out the reaction uridine(54) in tRNA + S-adenosyl-L-methionine = 5-methyluridine(54) in tRNA + S-adenosyl-L-homocysteine + H(+). The catalysed reaction is uridine(341) in tmRNA + S-adenosyl-L-methionine = 5-methyluridine(341) in tmRNA + S-adenosyl-L-homocysteine + H(+). Its function is as follows. Dual-specificity methyltransferase that catalyzes the formation of 5-methyluridine at position 54 (m5U54) in all tRNAs, and that of position 341 (m5U341) in tmRNA (transfer-mRNA). This Pseudomonas fluorescens (strain ATCC BAA-477 / NRRL B-23932 / Pf-5) protein is tRNA/tmRNA (uracil-C(5))-methyltransferase.